The chain runs to 288 residues: Bifunctional protein FolD (288 aa).

Residues 166–168 and Ile232 each bind NADP(+); that span reads GAS.

It belongs to the tetrahydrofolate dehydrogenase/cyclohydrolase family. As to quaternary structure, homodimer.

The catalysed reaction is (6R)-5,10-methylene-5,6,7,8-tetrahydrofolate + NADP(+) = (6R)-5,10-methenyltetrahydrofolate + NADPH. The enzyme catalyses (6R)-5,10-methenyltetrahydrofolate + H2O = (6R)-10-formyltetrahydrofolate + H(+). It functions in the pathway one-carbon metabolism; tetrahydrofolate interconversion. Catalyzes the oxidation of 5,10-methylenetetrahydrofolate to 5,10-methenyltetrahydrofolate and then the hydrolysis of 5,10-methenyltetrahydrofolate to 10-formyltetrahydrofolate. The polypeptide is Bifunctional protein FolD (Escherichia coli O139:H28 (strain E24377A / ETEC)).